The primary structure comprises 65 residues: Large ribosomal subunit protein bL31 (65 aa).

Residues cysteine 16, cysteine 18, cysteine 36, and cysteine 39 each coordinate Zn(2+).

It belongs to the bacterial ribosomal protein bL31 family. Type A subfamily. In terms of assembly, part of the 50S ribosomal subunit. Zn(2+) is required as a cofactor.

Functionally, binds the 23S rRNA. This Desulfitobacterium hafniense (strain DSM 10664 / DCB-2) protein is Large ribosomal subunit protein bL31.